Consider the following 215-residue polypeptide: Pyridoxine/pyridoxamine 5'-phosphate oxidase (215 aa).

Substrate is bound by residues Arg-8–Tyr-11 and Lys-66. FMN is bound by residues Arg-61–Lys-66, Tyr-76–Thr-77, Arg-82, Lys-83, and Gln-105. Residues Tyr-123 and Arg-127 each coordinate substrate. Residues Gln-140–Ser-141 and Trp-186 contribute to the FMN site. Arg-192–His-194 is a binding site for substrate. Arg-196 is an FMN binding site.

It belongs to the pyridoxamine 5'-phosphate oxidase family. As to quaternary structure, homodimer. It depends on FMN as a cofactor.

It carries out the reaction pyridoxamine 5'-phosphate + O2 + H2O = pyridoxal 5'-phosphate + H2O2 + NH4(+). It catalyses the reaction pyridoxine 5'-phosphate + O2 = pyridoxal 5'-phosphate + H2O2. It participates in cofactor metabolism; pyridoxal 5'-phosphate salvage; pyridoxal 5'-phosphate from pyridoxamine 5'-phosphate: step 1/1. The protein operates within cofactor metabolism; pyridoxal 5'-phosphate salvage; pyridoxal 5'-phosphate from pyridoxine 5'-phosphate: step 1/1. In terms of biological role, catalyzes the oxidation of either pyridoxine 5'-phosphate (PNP) or pyridoxamine 5'-phosphate (PMP) into pyridoxal 5'-phosphate (PLP). The chain is Pyridoxine/pyridoxamine 5'-phosphate oxidase from Salinibacter ruber (strain DSM 13855 / M31).